We begin with the raw amino-acid sequence, 498 residues long: L-amino acid oxidase Bs29 (498 aa).

A signal peptide spans 1–3 (SCA). The cysteines at positions 12 and 175 are disulfide-linked. Residues 45 to 46 (MS), 65 to 66 (EA), Arg-73, and 89 to 92 (GPMR) each bind FAD. Residue Arg-92 participates in substrate binding. Asn-174 is a glycosylation site (N-linked (GlcNAc...) asparagine). A substrate-binding site is contributed by His-225. Val-263 contacts FAD. Cys-333 and Cys-414 form a disulfide bridge. Tyr-374 contributes to the substrate binding site. FAD contacts are provided by residues Glu-459 and 466–471 (GWIDST). 466-467 (GW) contacts substrate.

Belongs to the flavin monoamine oxidase family. FIG1 subfamily. As to quaternary structure, monomer. This is in contrast with most of its orthologs, that are non-covalently linked homodimers. The cofactor is FAD. Expressed by the venom gland.

The protein resides in the secreted. It catalyses the reaction an L-alpha-amino acid + O2 + H2O = a 2-oxocarboxylate + H2O2 + NH4(+). The enzyme catalyses L-leucine + O2 + H2O = 4-methyl-2-oxopentanoate + H2O2 + NH4(+). In terms of biological role, catalyzes an oxidative deamination of predominantly hydrophobic and aromatic L-amino acids, thus producing hydrogen peroxide that may contribute to the diverse toxic effects of this enzyme. Shows activity on L-Leu. Damage cell membranes of the Gram-positive bacteria S.aureus (MIC=4 ug/ml and MBC=8 ug/ml) and the Gram-negative bacteria A.baumanni (MIC=2 ug/ml and MBC=4 ug/ml). This antibacterial activity is dependent on the production of hydrogen peroxyde, since it is inhibited by catalase, a hydrogen peroxyde scavenger. The chain is L-amino acid oxidase Bs29 from Bothriechis schlegelii (Eyelash palm pitviper).